The chain runs to 126 residues: MSILNKAILTGGLVMGVAFSAMAHPELKSSVPQADSAVAAPEKIQLNFSENLTVKFSGAKLTMTGMKGMSSHSPMPVAAKVAPGADPKSMVIIPREPLPAGTYRVDWRAVSSDTHPITGNYTFTVK.

Positions 1-23 (MSILNKAILTGGLVMGVAFSAMA) are cleaved as a signal peptide. H24 lines the Cu(2+) pocket. M63, M66, M69, H72, and M75 together coordinate Cu(+). Residue H115 coordinates Cu(2+).

This sequence belongs to the CopC family. In terms of assembly, monomer-dimer equilibrium in solution for the apo protein. Dimerization is significantly enhanced upon binding of copper(I).

The protein resides in the periplasm. Its function is as follows. Copper-binding protein involved in copper resistance. The polypeptide is Copper resistance protein C (Escherichia coli).